A 268-amino-acid chain; its full sequence is Zinc transporter ZupT (268 aa).

8 helical membrane passes run 5–25, 36–56, 75–95, 124–144, 157–177, 187–207, 211–231, and 248–268; these read ILFA…GSLI, VLTI…MIEI, VVTV…DKLI, MGLF…LATF, IAVA…APIF, FILS…GYFL, FFSP…MVYI, and FAIG…LLFT. Residues Asn136 and Glu139 each contribute to the Fe(2+) site. Zn(2+) is bound by residues Glu139 and His164. Fe(2+)-binding residues include Asn165, Glu168, and Glu197. Residue Glu168 participates in Zn(2+) binding.

Belongs to the ZIP transporter (TC 2.A.5) family. ZupT subfamily.

Its subcellular location is the cell membrane. It carries out the reaction Zn(2+)(in) = Zn(2+)(out). Its function is as follows. Mediates zinc uptake. May also transport other divalent cations. The sequence is that of Zinc transporter ZupT from Chlorobium chlorochromatii (strain CaD3).